The chain runs to 263 residues: 4-hydroxy-2-oxo-heptane-1,7-dioate aldolase (263 aa).

His-45 (proton acceptor) is an active-site residue. Gln-147 contacts substrate. Glu-149 serves as a coordination point for a divalent metal cation. Substrate is bound by residues Ala-174 and Asp-175. Asp-175 contacts a divalent metal cation.

It belongs to the HpcH/HpaI aldolase family. Homohexamer; trimer of dimers. The cofactor is a divalent metal cation.

The catalysed reaction is 4-hydroxy-2-oxoheptanedioate = succinate semialdehyde + pyruvate. It functions in the pathway aromatic compound metabolism; 4-hydroxyphenylacetate degradation; pyruvate and succinate semialdehyde from 4-hydroxyphenylacetate: step 7/7. Its function is as follows. Catalyzes the reversible retro-aldol cleavage of 4-hydroxy-2-ketoheptane-1,7-dioate (HKHD) to pyruvate and succinic semialdehyde. The protein is 4-hydroxy-2-oxo-heptane-1,7-dioate aldolase of Salmonella heidelberg (strain SL476).